A 207-amino-acid polypeptide reads, in one-letter code: ATP-dependent Clp protease proteolytic subunit (207 aa).

A propeptide spanning residues 1-14 is cleaved from the precursor; it reads MSYSGERDNLAPHM. The active-site Nucleophile is the Ser111. His136 is an active-site residue.

It belongs to the peptidase S14 family. In terms of assembly, fourteen ClpP subunits assemble into 2 heptameric rings which stack back to back to give a disk-like structure with a central cavity, resembling the structure of eukaryotic proteasomes. Component of the ClpAP and ClpXP complexes.

It is found in the cytoplasm. The enzyme catalyses Hydrolysis of proteins to small peptides in the presence of ATP and magnesium. alpha-casein is the usual test substrate. In the absence of ATP, only oligopeptides shorter than five residues are hydrolyzed (such as succinyl-Leu-Tyr-|-NHMec, and Leu-Tyr-Leu-|-Tyr-Trp, in which cleavage of the -Tyr-|-Leu- and -Tyr-|-Trp bonds also occurs).. Cleaves peptides in various proteins in a process that requires ATP hydrolysis. Has a chymotrypsin-like activity. Plays a major role in the degradation of misfolded proteins. The polypeptide is ATP-dependent Clp protease proteolytic subunit (Salmonella paratyphi A (strain ATCC 9150 / SARB42)).